Reading from the N-terminus, the 205-residue chain is CD83 antigen (205 aa).

The first 19 residues, 1-19 (MSRGLQLLLLSCAYSLAPA), serve as a signal peptide directing secretion. An Ig-like V-type domain is found at 20–114 (TPEVKVACSE…YRCTLQDPDG (95 aa)). The Extracellular portion of the chain corresponds to 20–144 (TPEVKVACSE…EETFKKYRAE (125 aa)). Residues C35 and C107 are joined by a disulfide bond. The span at 60–69 (METPQEDHLR) shows a compositional bias: basic and acidic residues. The interval 60-81 (METPQEDHLRGQHYHQKGQNGS) is disordered. 3 N-linked (GlcNAc...) asparagine glycosylation sites follow: N79, N96, and N117. Residues 145–166 (IVLLLALVIFYLTLIIFTCKFA) form a helical membrane-spanning segment. Residues 167–205 (RLQSIFPDFSKAGMERAFLPVTSPNKHLGLVTPHKTELV) lie on the Cytoplasmic side of the membrane.

Monomer. Homodimer. Homotrimer. Interacts with MARCHF1; this interaction antagonizes MARCHF1-mediated MHC II and CD86 down-regulation. Post-translationally, glycosylated when expressed on activated dendritic cells. As to expression, expressed by activated lymphocytes, Langerhans cells and activatd dendritic cells.

Its subcellular location is the membrane. In terms of biological role, transmembrane glycoprotein predominantly found on the surface of many immune cells including dendritic cells or lymphocytes that plays various roles in immune response regulation. Plays an essential role in CD4(+) T-selection, differentiation and stability by regulating the activity of the major E3 ubiquitin ligase responsible for controlling MHCII trafficking MARCHF8. Also inhibits MARCHF1 association with MHCII or CD86 to prevent their ubiquitination and subsequent degradation. In addition, acts as an important modulator of protective responses against acute infections. This chain is CD83 antigen (CD83), found in Homo sapiens (Human).